Here is an 80-residue protein sequence, read N- to C-terminus: Exodeoxyribonuclease 7 small subunit (80 aa).

The protein belongs to the XseB family. Heterooligomer composed of large and small subunits.

Its subcellular location is the cytoplasm. The enzyme catalyses Exonucleolytic cleavage in either 5'- to 3'- or 3'- to 5'-direction to yield nucleoside 5'-phosphates.. Functionally, bidirectionally degrades single-stranded DNA into large acid-insoluble oligonucleotides, which are then degraded further into small acid-soluble oligonucleotides. This chain is Exodeoxyribonuclease 7 small subunit, found in Marinomonas sp. (strain MWYL1).